A 547-amino-acid chain; its full sequence is Cellodextrinase (547 aa).

The active-site Nucleophile is aspartate 148. Residues histidine 474, aspartate 520, and glutamate 529 contribute to the active site.

Belongs to the glycosyl hydrolase 9 (cellulase E) family.

The protein resides in the secreted. The catalysed reaction is Endohydrolysis of (1-&gt;4)-beta-D-glucosidic linkages in cellulose, lichenin and cereal beta-D-glucans.. Its activity is regulated as follows. Is not inhibited by methylcellulose. Functionally, glycoside hydrolase that rapidly hydrolyzes short-chain cellodextrins to yield either cellobiose or cellobiose and glucose as end products; cellobiose is not hydrolyzed further. Also shows limited activity against endoglucanase specific substrates (carboxymethylcellulose (CMC), lichenan, laminarin and xylan). The sequence is that of Cellodextrinase from Butyrivibrio fibrisolvens.